The primary structure comprises 938 residues: Isoleucine--tRNA ligase (938 aa).

A 'HIGH' region motif is present at residues 58–68 (PYANGSIHIGH). N6-acetyllysine is present on lysine 183. Glutamate 561 contacts L-isoleucyl-5'-AMP. The 'KMSKS' region signature appears at 602–606 (KMSKS). Lysine 605 contributes to the ATP binding site. Zn(2+) contacts are provided by cysteine 901, cysteine 904, cysteine 921, and cysteine 924.

It belongs to the class-I aminoacyl-tRNA synthetase family. IleS type 1 subfamily. As to quaternary structure, monomer. Zn(2+) is required as a cofactor.

It localises to the cytoplasm. It catalyses the reaction tRNA(Ile) + L-isoleucine + ATP = L-isoleucyl-tRNA(Ile) + AMP + diphosphate. In terms of biological role, catalyzes the attachment of isoleucine to tRNA(Ile). As IleRS can inadvertently accommodate and process structurally similar amino acids such as valine, to avoid such errors it has two additional distinct tRNA(Ile)-dependent editing activities. One activity is designated as 'pretransfer' editing and involves the hydrolysis of activated Val-AMP. The other activity is designated 'posttransfer' editing and involves deacylation of mischarged Val-tRNA(Ile). The protein is Isoleucine--tRNA ligase of Shigella flexneri.